The primary structure comprises 787 residues: Integrin beta-3 (787 aa).

The first 25 residues, 1–25, serve as a signal peptide directing secretion; the sequence is MRAQWPGQLWAALLALGALAGVVVG. Residues 26–717 lie on the Extracellular side of the membrane; sequence ESNICTTRGV…EEPECPKGPD (692 aa). Positions 29–75 constitute a PSI domain; the sequence is ICTTRGVNSCQQCLAVSPVCAWCSDETLSQGSPRCNLKENLLKDNCA. Disulfide bonds link cysteine 30/cysteine 48, cysteine 38/cysteine 460, cysteine 41/cysteine 63, cysteine 51/cysteine 74, cysteine 202/cysteine 209, cysteine 257/cysteine 298, cysteine 399/cysteine 411, cysteine 431/cysteine 458, cysteine 462/cysteine 482, cysteine 473/cysteine 485, cysteine 487/cysteine 496, cysteine 498/cysteine 528, cysteine 511/cysteine 526, cysteine 520/cysteine 531, cysteine 533/cysteine 546, cysteine 548/cysteine 569, cysteine 553/cysteine 567, cysteine 561/cysteine 572, and cysteine 574/cysteine 583. The region spanning 134-376 is the VWFA domain; sequence DYPVDIYYLM…QLIVDAYGKI (243 aa). Mg(2+) is bound by residues serine 146 and serine 148. Ca(2+)-binding residues include serine 148, aspartate 151, aspartate 152, and aspartate 183. Residues 202-209 are CX3CL1-binding; the sequence is CYNMKNAC. The tract at residues 202-209 is involved in CX3CL1-, NRG1-, FGF1- and IGF1-binding; sequence CYNMKNAC. Ca(2+) contacts are provided by asparagine 240, aspartate 242, proline 244, glutamate 245, and aspartate 276. Glutamate 245 provides a ligand contact to Mg(2+). Positions 292–312 are CX3CL1-binding; it reads LPNDGHCHIGTDNHYSASTTM. Residues asparagine 345 and asparagine 396 are each glycosylated (N-linked (GlcNAc...) asparagine). I-EGF domains lie at 462–497, 498–547, 548–584, and 585–624; these read CQAF…SMCE, CSEE…KYCE, CDDF…YYCN, and CTTR…DTCE. Residue asparagine 477 is glycosylated (N-linked (GlcNAc...) asparagine). The N-linked (GlcNAc...) asparagine glycan is linked to asparagine 584. 9 cysteine pairs are disulfide-bonded: cysteine 585–cysteine 608, cysteine 592–cysteine 606, cysteine 600–cysteine 611, cysteine 613–cysteine 623, cysteine 626–cysteine 629, cysteine 633–cysteine 680, cysteine 639–cysteine 660, cysteine 642–cysteine 656, and cysteine 688–cysteine 712. An N-linked (GlcNAc...) asparagine glycan is attached at asparagine 679. A helical transmembrane segment spans residues 718 to 740; that stretch reads ILVVLLSVMGAILLIGLATLLIW. Topologically, residues 741–787 are cytoplasmic; sequence KLLITIHDRKEFAKFEEERARAKWDTANNPLYKEATSTFTNITYRGT. Phosphothreonine is present on threonine 766. At tyrosine 772 the chain carries Phosphotyrosine. The short motif at 776–782 is the LIR element; that stretch reads TSTFTNI. Threonine 778 carries the post-translational modification Phosphothreonine. Tyrosine 784 is modified (phosphotyrosine).

The protein belongs to the integrin beta chain family. In terms of assembly, heterodimer of an alpha and a beta subunit. Beta-3 (ITGB3) associates with either alpha-IIB (ITGA2B) or alpha-V (ITGAV). Interacts with FLNB and COMP. Interacts with PDIA6 following platelet stimulation. Interacts with SYK; upon activation by ITGB3 promotes platelet adhesion. Interacts with MYO10. Interacts with DAB2. Interacts with FERMT2. Integrin ITGAV:ITGB3 interacts with FBLN5 (via N-terminus). Interacts with EMP2; regulates the levels of the heterodimer ITGA5:ITGB3 integrin expression on the plasma membrane. ITGAV:ITGB3 interacts with CCN3. ITGAV:ITGB3 and ITGA2B:ITGB3 interact with SELP (via C-type lectin domain); the interaction mediates cell-cell interaction and adhesion. ITGAV:ITGB3 interacts with AGRA2. ITGAV:ITGB3 is found in a ternary complex with CX3CR1 and CX3CL1. ITGAV:ITGB3 is found in a ternary complex with NRG1 and ERBB3. ITGAV:ITGB3 is found in a ternary complex with FGF1 and FGFR1. ITGAV:ITGB3 interacts with FGF2; it is likely that FGF2 can simultaneously bind ITGAV:ITGB3 and FGF receptors. ITGAV:ITGB3 binds to IL1B. ITGAV:ITGB3 is found in a ternary complex with IGF1 and IGF1R. ITGAV:ITGB3 interacts with IGF2. ITGAV:ITGB3 interacts with FBN1. ITGAV:ITGB3 interacts with CD9, CD81 and CD151 (via second extracellular domain). Interacts (via the allosteric site (site 2)) with CXCL12 in a CXCR4-independent manner. Interacts with MXRA8/DICAM; the interaction inhibits ITGAV:ITGB3 heterodimer formation. ITGAV:ITGB3 interacts with PTN. Forms a complex with PTPRZ1 and PTN that stimulates endothelial cell migration through ITGB3 Tyr-772 phosphorylation. ITGAV:ITGB3 interacts with SLC6A4. Interacts with SLC6A4 (via C-terminus); this interaction regulates SLC6A4 trafficking. ITGA2B:ITGB3 interacts with PPIA/CYPA; the interaction is ROS and PPIase activity-dependent and is increased in the presence of thrombin. Interacts with tensin TNS3; TNS3 also interacts with PEAK1, thus acting as an adapter molecule to bridge the association of PEAK1 with ITGB3. Interacts with TM4SF19. Phosphorylated on tyrosine residues in response to thrombin-induced platelet aggregation. Probably involved in outside-in signaling.

It localises to the cell membrane. It is found in the cell projection. The protein resides in the lamellipodium membrane. Its subcellular location is the cell junction. The protein localises to the focal adhesion. It localises to the postsynaptic cell membrane. It is found in the synapse. In terms of biological role, integrin alpha-V/beta-3 (ITGAV:ITGB3) is a receptor for cytotactin, fibronectin, laminin, matrix metalloproteinase-2, osteopontin, osteomodulin, prothrombin, thrombospondin, vitronectin and von Willebrand factor. Integrin alpha-IIB/beta-3 (ITGA2B:ITGB3) is a receptor for fibronectin, fibrinogen, plasminogen, prothrombin, thrombospondin and vitronectin. Integrins alpha-IIB/beta-3 and alpha-V/beta-3 recognize the sequence R-G-D in a wide array of ligands. Integrin alpha-IIB/beta-3 recognizes the sequence H-H-L-G-G-G-A-K-Q-A-G-D-V in fibrinogen gamma chain. Following activation integrin alpha-IIB/beta-3 brings about platelet/platelet interaction through binding of soluble fibrinogen. This step leads to rapid platelet aggregation which physically plugs ruptured endothelial surfaces. Fibrinogen binding enhances SELP expression in activated platelets. ITGAV:ITGB3 binds to fractalkine (CX3CL1) and acts as its coreceptor in CX3CR1-dependent fractalkine signaling. ITGAV:ITGB3 binds to NRG1 (via EGF domain) and this binding is essential for NRG1-ERBB signaling. ITGAV:ITGB3 binds to FGF1 and this binding is essential for FGF1 signaling. ITGAV:ITGB3 binds to FGF2 and this binding is essential for FGF2 signaling. ITGAV:ITGB3 binds to IGF1 and this binding is essential for IGF1 signaling. ITGAV:ITGB3 binds to IGF2 and this binding is essential for IGF2 signaling. ITGAV:ITGB3 binds to IL1B and this binding is essential for IL1B signaling. ITGAV:ITGB3 binds to PLA2G2A via a site (site 2) which is distinct from the classical ligand-binding site (site 1) and this induces integrin conformational changes and enhanced ligand binding to site 1. ITGAV:ITGB3 acts as a receptor for fibrillin-1 (FBN1) and mediates R-G-D-dependent cell adhesion to FBN1. ITGAV:ITGB3 binds to the Lilrb4a/Gp49b receptor and enhances the Lilrb4a-mediated inhibition of mast cell activation. ITGAV:ITGB3 also suppresses marginal zone B cell antibody production through its interaction with Lilrb4a. In brain, plays a role in synaptic transmission and plasticity. Involved in the regulation of the serotonin neurotransmission, is required to localize to specific compartments within the synapse the serotonin receptor SLC6A4 and for an appropriate reuptake of serotonin. Controls excitatory synaptic strength by regulating GRIA2-containing AMPAR endocytosis, which affects AMPAR abundance and composition. ITGAV:ITGB3 act as a receptor for CD40LG. ITGAV:ITGB3 acts as a receptor for IBSP and promotes cell adhesion and migration to IBSP. The polypeptide is Integrin beta-3 (Mus musculus (Mouse)).